A 110-amino-acid chain; its full sequence is Large ribosomal subunit protein uL24 (110 aa).

This sequence belongs to the universal ribosomal protein uL24 family. In terms of assembly, part of the 50S ribosomal subunit.

In terms of biological role, one of two assembly initiator proteins, it binds directly to the 5'-end of the 23S rRNA, where it nucleates assembly of the 50S subunit. Its function is as follows. One of the proteins that surrounds the polypeptide exit tunnel on the outside of the subunit. The polypeptide is Large ribosomal subunit protein uL24 (Roseiflexus castenholzii (strain DSM 13941 / HLO8)).